The following is a 255-amino-acid chain: Methylthioribulose-1-phosphate dehydratase (255 aa).

Residue Cys-111 participates in substrate binding. Zn(2+) contacts are provided by His-128 and His-130. Catalysis depends on Glu-157, which acts as the Proton donor/acceptor. His-213 serves as a coordination point for Zn(2+).

This sequence belongs to the aldolase class II family. MtnB subfamily. It depends on Zn(2+) as a cofactor.

The protein localises to the cytoplasm. It carries out the reaction 5-(methylsulfanyl)-D-ribulose 1-phosphate = 5-methylsulfanyl-2,3-dioxopentyl phosphate + H2O. It participates in amino-acid biosynthesis; L-methionine biosynthesis via salvage pathway; L-methionine from S-methyl-5-thio-alpha-D-ribose 1-phosphate: step 2/6. Its function is as follows. Catalyzes the dehydration of methylthioribulose-1-phosphate (MTRu-1-P) into 2,3-diketo-5-methylthiopentyl-1-phosphate (DK-MTP-1-P). In Talaromyces stipitatus (strain ATCC 10500 / CBS 375.48 / QM 6759 / NRRL 1006) (Penicillium stipitatum), this protein is Methylthioribulose-1-phosphate dehydratase.